We begin with the raw amino-acid sequence, 173 residues long: MAKFSPKVQDEGRDDGLREKMIAVNRVTKVVKGGRILGFAALTVVGDGDGRVGMGKGKSKEVPAAVQKAMEESRRNMIKVSLKHGTIHHTVMGQHGAASVMLNPAPKGTGIIAGGPMRAVFEVLGITDIVAKSHGSSNPYNMVRATFDALKHSTTPSEVAAKRGKSVEDIFTA.

Residues 17–80 (LREKMIAVNR…EESRRNMIKV (64 aa)) form the S5 DRBM domain.

The protein belongs to the universal ribosomal protein uS5 family. In terms of assembly, part of the 30S ribosomal subunit. Contacts proteins S4 and S8.

With S4 and S12 plays an important role in translational accuracy. Functionally, located at the back of the 30S subunit body where it stabilizes the conformation of the head with respect to the body. The protein is Small ribosomal subunit protein uS5 of Delftia acidovorans (strain DSM 14801 / SPH-1).